The primary structure comprises 695 residues: Polyribonucleotide nucleotidyltransferase (695 aa).

Residues aspartate 488 and aspartate 494 each coordinate Mg(2+). In terms of domain architecture, KH spans 554–613 (PKTTIIKIKTDKIRDLIGRGGETIKGIISTSCASIDVDDSGNVNIFSNNQKSFDTAVQMV). The S1 motif domain maps to 623–690 (NKVYTGKVVK…DRGRIKLSRK (68 aa)).

The protein belongs to the polyribonucleotide nucleotidyltransferase family. In terms of assembly, component of the RNA degradosome, which is a multiprotein complex involved in RNA processing and mRNA degradation. Mg(2+) is required as a cofactor.

It localises to the cytoplasm. It catalyses the reaction RNA(n+1) + phosphate = RNA(n) + a ribonucleoside 5'-diphosphate. Involved in mRNA degradation. Catalyzes the phosphorolysis of single-stranded polyribonucleotides processively in the 3'- to 5'-direction. In Vesicomyosocius okutanii subsp. Calyptogena okutanii (strain HA), this protein is Polyribonucleotide nucleotidyltransferase.